The chain runs to 250 residues: 4-hydroxy-tetrahydrodipicolinate reductase (250 aa).

NAD(+) contacts are provided by residues 10–15 (GAKGRI), 78–80 (GTT), and 105–108 (APNF). Histidine 135 acts as the Proton donor/acceptor in catalysis. Histidine 136 contacts (S)-2,3,4,5-tetrahydrodipicolinate. Lysine 139 acts as the Proton donor in catalysis. Position 145–146 (145–146 (GT)) interacts with (S)-2,3,4,5-tetrahydrodipicolinate.

The protein belongs to the DapB family.

The protein localises to the cytoplasm. The catalysed reaction is (S)-2,3,4,5-tetrahydrodipicolinate + NAD(+) + H2O = (2S,4S)-4-hydroxy-2,3,4,5-tetrahydrodipicolinate + NADH + H(+). It catalyses the reaction (S)-2,3,4,5-tetrahydrodipicolinate + NADP(+) + H2O = (2S,4S)-4-hydroxy-2,3,4,5-tetrahydrodipicolinate + NADPH + H(+). Its pathway is amino-acid biosynthesis; L-lysine biosynthesis via DAP pathway; (S)-tetrahydrodipicolinate from L-aspartate: step 4/4. Its function is as follows. Catalyzes the conversion of 4-hydroxy-tetrahydrodipicolinate (HTPA) to tetrahydrodipicolinate. This chain is 4-hydroxy-tetrahydrodipicolinate reductase, found in Streptomyces coelicolor (strain ATCC BAA-471 / A3(2) / M145).